The chain runs to 102 residues: Large ribosomal subunit protein uL24 (102 aa).

Belongs to the universal ribosomal protein uL24 family. As to quaternary structure, part of the 50S ribosomal subunit.

Its function is as follows. One of two assembly initiator proteins, it binds directly to the 5'-end of the 23S rRNA, where it nucleates assembly of the 50S subunit. In terms of biological role, one of the proteins that surrounds the polypeptide exit tunnel on the outside of the subunit. This is Large ribosomal subunit protein uL24 from Limosilactobacillus fermentum (strain NBRC 3956 / LMG 18251) (Lactobacillus fermentum).